Here is a 323-residue protein sequence, read N- to C-terminus: Transaldolase (323 aa).

The active-site Schiff-base intermediate with substrate is the K131.

The protein belongs to the transaldolase family. Type 1 subfamily. As to quaternary structure, homodimer.

The protein resides in the cytoplasm. It catalyses the reaction D-sedoheptulose 7-phosphate + D-glyceraldehyde 3-phosphate = D-erythrose 4-phosphate + beta-D-fructose 6-phosphate. It participates in carbohydrate degradation; pentose phosphate pathway; D-glyceraldehyde 3-phosphate and beta-D-fructose 6-phosphate from D-ribose 5-phosphate and D-xylulose 5-phosphate (non-oxidative stage): step 2/3. In terms of biological role, transaldolase is important for the balance of metabolites in the pentose-phosphate pathway. In Blochmanniella floridana, this protein is Transaldolase.